We begin with the raw amino-acid sequence, 325 residues long: Protease HtpX homolog (325 aa).

Residues 20 to 40 (IGYLLGGGGGMMIALVIAVAM) form a helical membrane-spanning segment. His-130 lines the Zn(2+) pocket. Residue Glu-131 is part of the active site. Position 134 (His-134) interacts with Zn(2+). 2 helical membrane-spanning segments follow: residues 145–165 (IVAT…FLGG) and 173–193 (VMGV…AMIV). Position 202 (Glu-202) interacts with Zn(2+). Residues 286–325 (SAAMTARAAAPSQNSGPWGQRSDNAGGNSNGGSRYRGPWS) are disordered. Over residues 306-325 (RSDNAGGNSNGGSRYRGPWS) the composition is skewed to low complexity.

The protein belongs to the peptidase M48B family. It depends on Zn(2+) as a cofactor.

Its subcellular location is the cell inner membrane. This chain is Protease HtpX homolog, found in Brucella melitensis biotype 2 (strain ATCC 23457).